The primary structure comprises 800 residues: MIQKLIKNRQRSKWVLFTGASLWIFFILDFMNSNYYNTESHISSYSIYNVYDNLHEETESPPKSALSSSLLEPSTNQQTSDFKNHLLYKSLISSLFQNTTKQTKDLNSNIYDDIFSNHKLETVLGTLSFKERCDLYFKNVFAEDVNWHFNPDTRYDMHFDKNTKEFKDFIKVKELVIQEKFDKMKEKFKEEDYNRELSKLKKSMFTDFLNEKFEQEIVNRLSTFRIFNKCYITNDETPQINKINQFITNQQKLVQDIHRDESGNFYKSKIDKLKLTNKEALVDLMVTKSSTFEHRVYPWISKEYPVYERWTGKVYHEPPNYYEILNHDPMQKTPKKIQQSNNAAQPFLKQFKNKFNGRGIVLTIGNQHSDYAVSLIHLLRALDNKLPIQIVYYDDVNEESKRKIVTAAQEDFRSLPHSFEKVAHLFGDKYINSQGKGLQPQEVWFVNAYNSIHKNYRGKFSRFGNKLLASLFNSFSEFMLIDVDTVLMQPPEYFFQLKNYQTTGTYFFKDRSVLQRRTVEDGKFFERMGPSTVDQMMFDIPIMTNYTTTRELFRGLQHYMESGLVMINKDKHLNSILMITQINLIGPITGKVWGDKELFWLGFAINGDEEYYFDDNFAAAIGELTPPQDRARKDGTWHHSKEICSPHPGHVSGDDNHSLLWINSGFRFCHQADEVNFEKEAKKKTRLKHLHTADQFRTFYYNPLRITHAVVPPLDQDLQDRKNAMDEPTSGWLWESGYCKRYMWCAYSSVGGPQKRPDEKDDTVDNNETKDNTLDGILVEYNQDEIALFNYLGDIWVGTE.

At 1 to 12 (MIQKLIKNRQRS) the chain is on the cytoplasmic side. A helical transmembrane segment spans residues 13–30 (KWVLFTGASLWIFFILDF). The Lumenal portion of the chain corresponds to 31 to 800 (MNSNYYNTES…YLGDIWVGTE (770 aa)). 4 N-linked (GlcNAc...) asparagine glycosylation sites follow: asparagine 98, asparagine 545, asparagine 656, and asparagine 767.

This sequence belongs to the MNN1/MNT family.

The protein resides in the golgi apparatus membrane. It participates in protein modification; protein glycosylation. Responsible for addition of the terminal mannose residues to the outer chain of core N-linked polysaccharides and to O-linked mannotriose. Implicated in late Golgi modifications. This Candida albicans (strain SC5314 / ATCC MYA-2876) (Yeast) protein is Putative alpha-1,3-mannosyltransferase MNN1 (MNN1).